Here is a 380-residue protein sequence, read N- to C-terminus: Cystathionine gamma-synthase (380 aa).

N6-(pyridoxal phosphate)lysine is present on lysine 195.

This sequence belongs to the trans-sulfuration enzymes family. Homotetramer. Pyridoxal 5'-phosphate is required as a cofactor.

It localises to the cytoplasm. The enzyme catalyses O-succinyl-L-homoserine + L-cysteine = L,L-cystathionine + succinate + H(+). The protein operates within amino-acid biosynthesis; L-methionine biosynthesis via de novo pathway; L-cystathionine from O-succinyl-L-homoserine: step 1/1. Four natural products, alpha-lapachone, 9-hydroxy-alpha-lapachone, Paulownin, and Yangambin, show strong inhibitory activities against CGS. All these four inhibitors prevent the binding of OSHS to CGS in a non-competitive fashion. These compounds are specific inhibitors against CGS from H.pylori relative to E.coli since they exhibit very low inhibition activities against CGS from E.coli. Functionally, catalyzes the formation of L-cystathionine from O-succinyl-L-homoserine (OSHS) and L-cysteine, via a gamma-replacement reaction. In the absence of thiol, catalyzes gamma-elimination to form 2-oxobutanoate, succinate and ammonia. The sequence is that of Cystathionine gamma-synthase (metB) from Helicobacter pylori (Campylobacter pylori).